We begin with the raw amino-acid sequence, 306 residues long: Putative HPr kinase/phosphorylase 2 (306 aa).

Residues His138 and Lys159 contribute to the active site. 153–160 (GESGVGKS) provides a ligand contact to ATP. A Mg(2+)-binding site is contributed by Ser160. Asp177 functions as the Proton acceptor; for phosphorylation activity. Proton donor; for dephosphorylation activity in the catalytic mechanism. An important for the catalytic mechanism of both phosphorylation and dephosphorylation region spans residues 201–210 (LALRSVGLLN). Residues 264–269 (QLQPGR) are important for the catalytic mechanism of dephosphorylation.

The protein belongs to the HPrK/P family. Homohexamer. Mg(2+) is required as a cofactor.

It carries out the reaction [HPr protein]-L-serine + ATP = [HPr protein]-O-phospho-L-serine + ADP + H(+). The enzyme catalyses [HPr protein]-O-phospho-L-serine + phosphate + H(+) = [HPr protein]-L-serine + diphosphate. Functionally, catalyzes the ATP- as well as the pyrophosphate-dependent phosphorylation of a specific serine residue in HPr, a phosphocarrier protein of the phosphoenolpyruvate-dependent sugar phosphotransferase system (PTS). HprK/P also catalyzes the pyrophosphate-producing, inorganic phosphate-dependent dephosphorylation (phosphorolysis) of seryl-phosphorylated HPr (P-Ser-HPr). The two antagonistic activities of HprK/P are regulated by several intracellular metabolites, which change their concentration in response to the absence or presence of rapidly metabolisable carbon sources (glucose, fructose, etc.) in the growth medium. Also phosphorylates/dephosphorylates the HPr-like catabolite repression protein crh on a specific serine residue. Therefore, by controlling the phosphorylation state of HPr and crh, HPrK/P is a sensor enzyme that plays a major role in the regulation of carbon metabolism and sugar transport: it mediates carbon catabolite repression (CCR), and regulates PTS-catalyzed carbohydrate uptake and inducer exclusion. The chain is Putative HPr kinase/phosphorylase 2 (hprK2) from Oceanobacillus iheyensis (strain DSM 14371 / CIP 107618 / JCM 11309 / KCTC 3954 / HTE831).